An 808-amino-acid polypeptide reads, in one-letter code: Aminotransferase ALT4 (808 aa).

It belongs to the class-II pyridoxal-phosphate-dependent aminotransferase family. BioF subfamily. Requires pyridoxal 5'-phosphate as cofactor.

It functions in the pathway mycotoxin biosynthesis. Its function is as follows. Aminotransferase; part of the gene cluster that mediates the biosynthesis of the host-selective toxins (HSTs) AAL-toxins, sphinganine-analog mycotoxins responsible for Alternaria stem canker on tomato by the tomato pathotype. The biosynthesis starts with the polyketide synthase ALT1-catalyzed C-16 carbon chain assembly from one starter acetyl-CoA unit with malonyl-CoA extender units. ALT1 also selectively transfers methyl groups at the first and the third cycle of chain elongation for AAL toxin. The C-16 polyketide chain is released from the enzyme by a nucleophilic attack of a carbanion, which is derived from R-carbon of glycin by decarboxylation, on the carbonyl carbon of polyketide acyl chain. This step is probably catalyzed by a pyridoxal 5'-phosphate-dependent aminoacyl transferase ALT4. The respective functions of the other enzymes encoded by the cluster have still to be elucidated. The sphingosine N-acyltransferase-like protein ALT7 seems not to act as a resistance/self-tolerance factor against the toxin in the toxin biosynthetic gene cluster, contrary to what is expected. This is Aminotransferase ALT4 from Alternaria alternata (Alternaria rot fungus).